The sequence spans 683 residues: DNA-directed RNA polymerase subunit beta' (683 aa).

The Zn(2+) site is built by C69, C71, C87, and C90. Positions 489, 491, and 493 each coordinate Mg(2+).

Belongs to the RNA polymerase beta' chain family. RpoC1 subfamily. In plastids the minimal PEP RNA polymerase catalytic core is composed of four subunits: alpha, beta, beta', and beta''. When a (nuclear-encoded) sigma factor is associated with the core the holoenzyme is formed, which can initiate transcription. It depends on Mg(2+) as a cofactor. Zn(2+) serves as cofactor.

It is found in the plastid. The protein resides in the chloroplast. It carries out the reaction RNA(n) + a ribonucleoside 5'-triphosphate = RNA(n+1) + diphosphate. DNA-dependent RNA polymerase catalyzes the transcription of DNA into RNA using the four ribonucleoside triphosphates as substrates. The protein is DNA-directed RNA polymerase subunit beta' of Sorghum bicolor (Sorghum).